A 490-amino-acid chain; its full sequence is Probable glycine dehydrogenase (decarboxylating) subunit 2 (490 aa).

Lys273 is subject to N6-(pyridoxal phosphate)lysine.

It belongs to the GcvP family. C-terminal subunit subfamily. The glycine cleavage system is composed of four proteins: P, T, L and H. In this organism, the P 'protein' is a heterodimer of two subunits. Pyridoxal 5'-phosphate serves as cofactor.

It catalyses the reaction N(6)-[(R)-lipoyl]-L-lysyl-[glycine-cleavage complex H protein] + glycine + H(+) = N(6)-[(R)-S(8)-aminomethyldihydrolipoyl]-L-lysyl-[glycine-cleavage complex H protein] + CO2. Functionally, the glycine cleavage system catalyzes the degradation of glycine. The P protein binds the alpha-amino group of glycine through its pyridoxal phosphate cofactor; CO(2) is released and the remaining methylamine moiety is then transferred to the lipoamide cofactor of the H protein. This Staphylococcus aureus (strain bovine RF122 / ET3-1) protein is Probable glycine dehydrogenase (decarboxylating) subunit 2.